The sequence spans 1279 residues: Sterol regulatory element-binding protein cleavage-activating protein (1279 aa).

The Cytoplasmic portion of the chain corresponds to 1 to 18 (MTLTERLREKISQAFYNH). Residues 19 to 39 (GLLCASYPIPIILFTGLCILA) traverse the membrane as a helical segment. The Lumenal segment spans residues 40–279 (CCYPLLKLPL…SLVHVHFKEE (240 aa)). Positions 46 to 284 (KLPLPGTGPV…HFKEEIGIAE (239 aa)) are loop-1. Residues 60 to 81 (PVKDYSPPPSASDHKPGEPSEQ) are disordered. Asn263 carries N-linked (GlcNAc...) asparagine glycosylation. A helical transmembrane segment spans residues 280–300 (IGIAELIPLVTTYIILFAYIY). Residues 284 to 442 (ELIPLVTTYI…MPFFTTVLSI (159 aa)) form the SSD domain. Residues 301–312 (FSTRKIDMVKSK) are Cytoplasmic-facing. A helical membrane pass occupies residues 313-333 (WGLALAAVVTVLSSLLMSVGL). The Lumenal segment spans residues 334–344 (CTLFGLTPTLN). The chain crosses the membrane as a helical span at residues 345 to 365 (GGEIFPYLVVVIGLENVLVLT). Over 366–401 (KSVVSTPVDLEVKLRIAQGLSSESWSIMKNMATELG) the chain is Cytoplasmic. The helical transmembrane segment at 402-422 (IILIGYFTLVPAIQEFCLFAV) threads the bilayer. Residue Val423 is a topological domain, lumenal. The helical transmembrane segment at 424-444 (GLVSDFFLQMPFFTTVLSIDI) threads the bilayer. At 445–518 (RRMELADLNK…FLARTRLAQR (74 aa)) the chain is on the cytoplasmic side. Residues 447 to 452 (MELADL) carry the ER export signal motif. Residues Lys454 and Lys466 each participate in a glycyl lysine isopeptide (Lys-Gly) (interchain with G-Cter in ubiquitin) cross-link. The helical transmembrane segment at 519–539 (LIMAGTVVWIGILAYTDPAGL) threads the bilayer. The tract at residues 535–710 (DPAGLRTYLA…QAHRDVTLYK (176 aa)) is loop-7. Residues 540-707 (RTYLAAQVTE…GVAQAHRDVT (168 aa)) are Lumenal-facing. The disordered stretch occupies residues 588 to 617 (LENQTLPGEPPEPGGQAEGVHDSPAPEVTW). Asn590 and Asn641 each carry an N-linked (GlcNAc...) asparagine glycan. Positions 668-696 (EGRHPQDSRSAWSPPQPAQGGLWDAGPKG) are disordered. Residues 708 to 728 (LYKVAALGLATGILLVLLLCL) traverse the membrane as a helical segment. Over 729–1279 (YRVLCPRNYG…YVPSVLEKLD (551 aa)) the chain is Cytoplasmic. Residues 730–1279 (RVLCPRNYGQ…YVPSVLEKLD (550 aa)) are interaction with SREBF2. Residues 770 to 810 (VLRGHLMDIECLASDGMLLVSCCLAGHVCVWDAQTGDCLTR) form a WD 1 repeat. Ser821, Ser837, Ser843, and Ser850 each carry phosphoserine. 3 disordered regions span residues 834–868 (ERLS…LFGD), 883–903 (HPRL…CRRT), and 925–959 (VPMH…GSPS). Over residues 885 to 896 (RLPELDHPEPRH) the composition is skewed to basic and acidic residues. Positions 929–944 (TPAPRPPSPGPTPPQT) are enriched in pro residues. Ser936 bears the Phosphoserine mark. 2 WD repeats span residues 952 to 1002 (PPEK…LRCS) and 1005 to 1042 (EVAS…ALSP). At Arg1051 the chain carries Omega-N-methylarginine. 4 WD repeats span residues 1077–1114 (AHQK…CLFT), 1117–1155 (GHSG…RVSH), 1158–1195 (AHRG…KLYS), and 1197–1235 (QQDL…LLQT).

It belongs to the WD repeat SCAP family. In terms of assembly, membrane region forms a homotetramer. Component of the SCAP-SREBP complex (composed of SCAP and SREBF1/SREBP1 or SREBF2/SREBP2); interacts with SREBF1/SREBP1 or SREBF2/SREBP2 through its C-terminal cytoplasmic domain. Forms a ternary complex with INSIG1 or INSIG2 through its transmembrane domains at high sterol concentrations. Interacts with PAQR3; the interaction anchors the SCAP-SREBP complex to the Golgi apparatus in low cholesterol conditions. Interacts with the SEC23-SEC24 complex in a SAR1-GTP-dependent manner through an ER export signal in its third cytoplasmic loop. Interacts with RNF139; the interaction inhibits the interaction of SCAP with SEC24B and hampering the ER to Golgi transport of the SCAP-SREBP complex. Interacts with SPRING1. Post-translationally, ubiquitinated at Lys-454 and Lys-466. RNF145 triggers ubiquitination of SCAP, likely inhibiting SCAP-SREBP complex transport to the Golgi apparatus and the subsequent processing/maturation of SREBF2/SREBP2. Widely expressed with higher levels in lung, kidney, gut, brain and adipose tissue. In terms of tissue distribution, expressed in liver and muscle. Isoform 3 expressed in testis. As to expression, expressed in testis.

The protein resides in the endoplasmic reticulum membrane. It is found in the golgi apparatus membrane. The protein localises to the cytoplasmic vesicle. It localises to the COPII-coated vesicle membrane. Escort protein required for cholesterol as well as lipid homeostasis. Regulates export of the SCAP-SREBP complex from the endoplasmic reticulum to the Golgi upon low cholesterol, thereby regulating the processing of sterol regulatory element-binding proteins (SREBPs) SREBF1/SREBP1 and SREBF2/SREBP2. At high sterol concentrations, formation of a ternary complex with INSIG (INSIG1 or INSIG2) leads to mask the ER export signal in SCAP, promoting retention of the complex in the endoplasmic reticulum. Low sterol concentrations trigger release of INSIG, a conformational change in the SSD domain of SCAP, unmasking of the ER export signal, promoting recruitment into COPII-coated vesicles and transport of the SCAP-SREBP to the Golgi: in the Golgi, SREBPs are then processed, releasing the transcription factor fragment of SREBPs from the membrane, its import into the nucleus and up-regulation of LDLR, INSIG1 and the mevalonate pathway. Binds cholesterol via its SSD domain. This chain is Sterol regulatory element-binding protein cleavage-activating protein, found in Sus scrofa (Pig).